We begin with the raw amino-acid sequence, 118 residues long: MRNKYIEAFENAQIENKSVPDFRAGDTLRIAIRIKEGDKTRVQNFEGICIARRGSGSGETFIIRKIGANSVGVERIFPIYSESLESITVLRRGRIRRSKLFYLRDRRGKAARIKELKK.

Belongs to the bacterial ribosomal protein bL19 family.

Its function is as follows. This protein is located at the 30S-50S ribosomal subunit interface and may play a role in the structure and function of the aminoacyl-tRNA binding site. The chain is Large ribosomal subunit protein bL19 from Campylobacter fetus subsp. fetus (strain 82-40).